A 1365-amino-acid chain; its full sequence is Serine/threonine-protein kinase LMTK1 (1365 aa).

Residues 32 to 52 (LAVVAVSFSGIFTVVILMLAC) traverse the membrane as a helical segment. Residues 126-396 (LLYLKEIGHG…PTAEEVHLLL (271 aa)) enclose the Protein kinase domain. Residues 132–140 (IGHGWFGKV) and Lys-157 contribute to the ATP site. Asp-254 functions as the Proton acceptor in the catalytic mechanism. Phosphoserine is present on Ser-500. Disordered stretches follow at residues 550 to 623 (PDCA…LPAE), 638 to 698 (DDPL…GYVS), 791 to 1186 (QEAE…PAVP), 1237 to 1293 (ESPT…EWDG), and 1343 to 1365 (ISDS…YTEA). The span at 560–575 (QAVTDQDNNSEESTVA) shows a compositional bias: polar residues. 2 stretches are compositionally biased toward low complexity: residues 638-655 (DDPL…QPSP) and 675-686 (SSNMSANNNSAS). 2 stretches are compositionally biased toward polar residues: residues 848 to 860 (LESS…QEAP) and 869 to 879 (EATSGVFTDLS). Composition is skewed to low complexity over residues 904 to 918 (PDSL…SASD) and 981 to 993 (PLLS…LSKK). A compositionally biased stretch (basic and acidic residues) spans 1015–1030 (PEKHSGIQDSQKEQDL). Ser-1035 is modified (phosphoserine). The span at 1037 to 1053 (GHQSVQAFPRSAVSSEV) shows a compositional bias: polar residues. The span at 1072-1083 (PLGAQGPVGVQP) shows a compositional bias: low complexity. The segment covering 1104–1132 (GSGTEPQGPSGQLSGRAQQGQMGNPSTPR) has biased composition (polar residues). Acidic residues predominate over residues 1150–1164 (PEEDEDTEDSEESDE). Position 1156 is a phosphothreonine (Thr-1156). Phosphoserine is present on residues Ser-1159, Ser-1162, Ser-1175, Ser-1178, and Ser-1253. Residues 1354-1365 (PAAGAGGRYTEA) show a composition bias toward gly residues.

Belongs to the protein kinase superfamily. Tyr protein kinase family. In terms of assembly, interacts with CDK5. In terms of processing, autophosphorylated. Phosphorylated by CDK5. Expressed in brain, and, to a lower extent, in kidney, heart, lung and skeletal muscle. In the brain, expressed in the olfactory bulb, cerebellum, striatum, hippocampal formation, thalamus, hypothalamus, and pontine nuclei (at protein level).

It is found in the membrane. It localises to the cytoplasm. The protein localises to the perinuclear region. Its subcellular location is the cell projection. The protein resides in the dendrite. It is found in the axon. It localises to the growth cone. It carries out the reaction L-seryl-[protein] + ATP = O-phospho-L-seryl-[protein] + ADP + H(+). The catalysed reaction is L-threonyl-[protein] + ATP = O-phospho-L-threonyl-[protein] + ADP + H(+). May be involved in neuronal differentiation. In Mus musculus (Mouse), this protein is Serine/threonine-protein kinase LMTK1 (Aatk).